The following is a 901-amino-acid chain: MutS protein homolog 5 (901 aa).

643 to 650 provides a ligand contact to ATP; sequence GANASGKS.

It belongs to the DNA mismatch repair MutS family. As to quaternary structure, heterooligomer of MSH4 and MSH5.

Its function is as follows. Involved in meiotic recombination. Facilitate crossovers between homologs during meiosis. The protein is MutS protein homolog 5 (MSH5) of Saccharomyces cerevisiae (strain ATCC 204508 / S288c) (Baker's yeast).